The following is a 255-amino-acid chain: BTB/POZ domain-containing protein KCTD14 (255 aa).

The interval M1–P29 is disordered. The 98-residue stretch at T33–G130 folds into the BTB domain.

This chain is BTB/POZ domain-containing protein KCTD14 (KCTD14), found in Homo sapiens (Human).